The primary structure comprises 394 residues: Phosphopentomutase (394 aa).

Mn(2+) contacts are provided by D15, D288, H293, D329, H330, and H341.

It belongs to the phosphopentomutase family. The cofactor is Mn(2+).

The protein localises to the cytoplasm. The catalysed reaction is 2-deoxy-alpha-D-ribose 1-phosphate = 2-deoxy-D-ribose 5-phosphate. It catalyses the reaction alpha-D-ribose 1-phosphate = D-ribose 5-phosphate. Its pathway is carbohydrate degradation; 2-deoxy-D-ribose 1-phosphate degradation; D-glyceraldehyde 3-phosphate and acetaldehyde from 2-deoxy-alpha-D-ribose 1-phosphate: step 1/2. Functionally, isomerase that catalyzes the conversion of deoxy-ribose 1-phosphate (dRib-1-P) and ribose 1-phosphate (Rib-1-P) to deoxy-ribose 5-phosphate (dRib-5-P) and ribose 5-phosphate (Rib-5-P), respectively. This is Phosphopentomutase from Bacillus licheniformis (strain ATCC 14580 / DSM 13 / JCM 2505 / CCUG 7422 / NBRC 12200 / NCIMB 9375 / NCTC 10341 / NRRL NRS-1264 / Gibson 46).